A 647-amino-acid chain; its full sequence is DNA ligase (647 aa).

Residues 30-34 (DEEYD), 79-80 (SM), and E105 each bind NAD(+). K107 functions as the N6-AMP-lysine intermediate in the catalytic mechanism. 3 residues coordinate NAD(+): R128, E162, and K301. Residues C395, C398, C411, and C416 each contribute to the Zn(2+) site. The 78-residue stretch at 570-647 (KSDSVIFGKT…ESAFNELVKE (78 aa)) folds into the BRCT domain.

The protein belongs to the NAD-dependent DNA ligase family. LigA subfamily. It depends on Mg(2+) as a cofactor. The cofactor is Mn(2+).

It catalyses the reaction NAD(+) + (deoxyribonucleotide)n-3'-hydroxyl + 5'-phospho-(deoxyribonucleotide)m = (deoxyribonucleotide)n+m + AMP + beta-nicotinamide D-nucleotide.. In terms of biological role, DNA ligase that catalyzes the formation of phosphodiester linkages between 5'-phosphoryl and 3'-hydroxyl groups in double-stranded DNA using NAD as a coenzyme and as the energy source for the reaction. It is essential for DNA replication and repair of damaged DNA. This is DNA ligase from Campylobacter jejuni subsp. doylei (strain ATCC BAA-1458 / RM4099 / 269.97).